The primary structure comprises 69 residues: UPF0437 protein AZC_3451 (69 aa).

The protein belongs to the UPF0437 family.

The sequence is that of UPF0437 protein AZC_3451 from Azorhizobium caulinodans (strain ATCC 43989 / DSM 5975 / JCM 20966 / LMG 6465 / NBRC 14845 / NCIMB 13405 / ORS 571).